We begin with the raw amino-acid sequence, 68 residues long: MNLEERVMELESRMAFQDDTIQALNDVLVKQRREFDHLQQQMAAMIKRQEEMGSQFDTFEEDAPPPHY.

It belongs to the SlyX family.

The protein is Protein SlyX homolog of Pseudomonas syringae pv. tomato (strain ATCC BAA-871 / DC3000).